The chain runs to 550 residues: Hydroxylamine reductase (550 aa).

Positions 3, 6, 18, and 25 each coordinate [2Fe-2S] cluster. Hybrid [4Fe-2O-2S] cluster contacts are provided by His249, Glu273, Cys317, Cys405, Cys433, Cys458, Glu492, and Lys494. Cysteine persulfide is present on Cys405.

It belongs to the HCP family. Requires [2Fe-2S] cluster as cofactor. Hybrid [4Fe-2O-2S] cluster is required as a cofactor.

The protein resides in the cytoplasm. It carries out the reaction A + NH4(+) + H2O = hydroxylamine + AH2 + H(+). Catalyzes the reduction of hydroxylamine to form NH(3) and H(2)O. The polypeptide is Hydroxylamine reductase (Escherichia coli (strain SE11)).